The sequence spans 632 residues: Gamma-aminobutyric acid receptor subunit theta (632 aa).

A signal peptide spans 1 to 21; the sequence is MGIRGMLRAAVILLLIRTWLA. Residues 22 to 268 lie on the Extracellular side of the membrane; it reads EGNYPSPIPK…FQVQREVNSY (247 aa). An N-linked (GlcNAc...) asparagine glycan is attached at Asn-127. Cys-183 and Cys-197 are oxidised to a cystine. Residues 269–289 form a helical membrane-spanning segment; sequence LVQVYWPTVLTTITSWISFWM. At 290 to 297 the chain is on the cytoplasmic side; sequence NYDSSAAR. Residues 298-315 traverse the membrane as a helical segment; sequence VTIGLTSMLILTTIDSHL. Residues 316-326 lie on the Extracellular side of the membrane; the sequence is RDKLPNISCIK. A helical transmembrane segment spans residues 327–347; that stretch reads AIDIYILVCLFFVFLSLLEYV. Residues 348–611 are Cytoplasmic-facing; sequence YINYLFYSRG…DYVPKVDKWS (264 aa). 2 disordered regions span residues 410–458 and 491–523; these read SPES…STSE and HGVT…LHHG. Positions 413–425 are enriched in polar residues; that stretch reads SLGSLTSTSEQAQ. The segment covering 426 to 439 has biased composition (low complexity); that stretch reads LATSESLSPLTSLS. Polar residues predominate over residues 448–458; the sequence is ESLSDLPSTSE. Over residues 491-511 the composition is skewed to basic and acidic residues; it reads HGVTHDHEDSNESLSSDERHG. The chain crosses the membrane as a helical span at residues 612-632; sequence RFLFPLAFGLFNIVYWVYHMY.

It belongs to the ligand-gated ion channel (TC 1.A.9) family. Gamma-aminobutyric acid receptor (TC 1.A.9.5) subfamily. GABRQ sub-subfamily. Heteropentamer, formed by a combination of alpha (GABRA1-6), beta (GABRB1-3), gamma (GABRG1-3), delta (GABRD), epsilon (GABRE), rho (GABRR1-3), pi (GABRP) and theta (GABRQ) chains, each subunit exhibiting distinct physiological and pharmacological properties. Expressed in brain.

The protein localises to the postsynaptic cell membrane. The protein resides in the cell membrane. It catalyses the reaction chloride(in) = chloride(out). Potentiated by etomidate, propofol, pregnanolone and pentobarbital. Its function is as follows. Theta subunit of the heteropentameric ligand-gated chloride channel gated by gamma-aminobutyric acid (GABA), a major inhibitory neurotransmitter in the brain. GABA-gated chloride channels, also named GABA(A) receptors (GABAAR), consist of five subunits arranged around a central pore and contain GABA active binding site(s) located at the alpha and beta subunit interfaces. When activated by GABA, GABAARs selectively allow the flow of chloride anions across the cell membrane down their electrochemical gradient. The polypeptide is Gamma-aminobutyric acid receptor subunit theta (Homo sapiens (Human)).